Consider the following 302-residue polypeptide: Recombination-associated protein RdgC (302 aa).

It belongs to the RdgC family.

It is found in the cytoplasm. The protein localises to the nucleoid. Its function is as follows. May be involved in recombination. This chain is Recombination-associated protein RdgC, found in Xylella fastidiosa (strain 9a5c).